Consider the following 121-residue polypeptide: Large ribosomal subunit protein uL18 (121 aa).

Positions 1 to 25 (MKIVISKPDKNKIRQKRHRRVRGKL) are disordered. Residues 13-23 (IRQKRHRRVRG) are compositionally biased toward basic residues.

The protein belongs to the universal ribosomal protein uL18 family. As to quaternary structure, part of the 50S ribosomal subunit; part of the 5S rRNA/L5/L18/L25 subcomplex. Contacts the 5S and 23S rRNAs.

Functionally, this is one of the proteins that bind and probably mediate the attachment of the 5S RNA into the large ribosomal subunit, where it forms part of the central protuberance. In Streptococcus pyogenes serotype M28 (strain MGAS6180), this protein is Large ribosomal subunit protein uL18.